The chain runs to 589 residues: LRR receptor-like serine/threonine-protein kinase FEI 2 (589 aa).

The N-terminal stretch at 1–28 (MGICLMKRCCSWFLLISFLSALTNENEA) is a signal peptide. Residues 29 to 236 (ISPDGEALLS…TGQGGNNPKR (208 aa)) are Extracellular-facing. LRR repeat units follow at residues 72–96 (TKRV…LGKL), 97–120 (DQLR…LGNC), 122–144 (ALEG…IGNL), 145–168 (SGLK…LGQL), and 170–193 (RLTK…LLAR). N-linked (GlcNAc...) asparagine glycans are attached at residues Asn-119 and Asn-143. Asn-175, Asn-215, and Asn-219 each carry an N-linked (GlcNAc...) asparagine glycan. The chain crosses the membrane as a helical span at residues 237–257 (LLISASATVGGLLLVALMCFW). Topologically, residues 258–589 (GCFLYKKLGR…PSDFYDSSSD (332 aa)) are cytoplasmic. The 273-residue stretch at 304–576 (LNEEHIIGCG…VVQLLESEVM (273 aa)) folds into the Protein kinase domain. Residues 310–318 (IGCGGFGTV) and Lys-332 each bind ATP. At Ser-384 the chain carries Phosphoserine. Asp-427 functions as the Proton acceptor in the catalytic mechanism. Thr-460, Thr-461, and Thr-466 each carry phosphothreonine. Tyr-474 bears the Phosphotyrosine mark.

Belongs to the protein kinase superfamily. Ser/Thr protein kinase family. In terms of assembly, interacts with the ACC synthases ACS5 and ACS9 but not ACS2, via the kinase domain. Autophosphorylated. As to expression, expressed in the root meristem and elongation zone, and in hypocotyls of etiolated seedlings.

It localises to the cell membrane. The enzyme catalyses L-seryl-[protein] + ATP = O-phospho-L-seryl-[protein] + ADP + H(+). The catalysed reaction is L-threonyl-[protein] + ATP = O-phospho-L-threonyl-[protein] + ADP + H(+). Functionally, involved in the signaling pathway that regulates cell wall function, including cellulose biosynthesis, likely via an 1-aminocyclopropane-1-carboxylic acid (ACC)-mediated signal (a precursor of ethylene). The sequence is that of LRR receptor-like serine/threonine-protein kinase FEI 2 (FEI2) from Arabidopsis thaliana (Mouse-ear cress).